We begin with the raw amino-acid sequence, 380 residues long: Large ribosomal subunit protein mL38 (380 aa).

A mitochondrion-targeting transit peptide spans 1-26; that stretch reads MAAPWWRVVLNGSRNWRGFSTSAALS. Residues 101-122 are a coiled coil; it reads QQLLERKRVLRELRTSVEEERA.

This sequence belongs to the phosphatidylethanolamine-binding protein family. Mitochondrion-specific ribosomal protein mL38 subfamily. In terms of assembly, component of the mitochondrial ribosome large subunit (39S) which comprises a 16S rRNA and about 50 distinct proteins.

It localises to the mitochondrion. This is Large ribosomal subunit protein mL38 (MRPL38) from Bos taurus (Bovine).